The chain runs to 264 residues: Thymidylate synthase (264 aa).

Arg21 provides a ligand contact to dUMP. His51 contributes to the (6R)-5,10-methylene-5,6,7,8-tetrahydrofolate binding site. 126 to 127 (RR) contacts dUMP. Cys146 acts as the Nucleophile in catalysis. DUMP-binding positions include 166 to 169 (RSGD), Asn177, and 207 to 209 (HLY). Asp169 contacts (6R)-5,10-methylene-5,6,7,8-tetrahydrofolate. Position 263 (Ala263) interacts with (6R)-5,10-methylene-5,6,7,8-tetrahydrofolate.

It belongs to the thymidylate synthase family. Bacterial-type ThyA subfamily. As to quaternary structure, homodimer.

It is found in the cytoplasm. The enzyme catalyses dUMP + (6R)-5,10-methylene-5,6,7,8-tetrahydrofolate = 7,8-dihydrofolate + dTMP. The protein operates within pyrimidine metabolism; dTTP biosynthesis. In terms of biological role, catalyzes the reductive methylation of 2'-deoxyuridine-5'-monophosphate (dUMP) to 2'-deoxythymidine-5'-monophosphate (dTMP) while utilizing 5,10-methylenetetrahydrofolate (mTHF) as the methyl donor and reductant in the reaction, yielding dihydrofolate (DHF) as a by-product. This enzymatic reaction provides an intracellular de novo source of dTMP, an essential precursor for DNA biosynthesis. The chain is Thymidylate synthase from Xanthomonas oryzae pv. oryzae (strain MAFF 311018).